We begin with the raw amino-acid sequence, 418 residues long: AP-3 complex subunit mu-2 (418 aa).

The 242-residue stretch at 176 to 417 folds into the MHD domain; sequence NNEAYFDVVE…MTKAGKFQVR (242 aa).

It belongs to the adaptor complexes medium subunit family. Adaptor protein complex 3 (AP-3) is a heterotetramer composed of two large adaptins (delta-type subunit AP3D1 and beta-type subunit AP3B1 or AP3B2), a medium adaptin (mu-type subunit AP3M1 or AP3M2) and a small adaptin (sigma-type subunit APS1 or AP3S2). AP-3 associates with the BLOC-1 complex.

It localises to the golgi apparatus. It is found in the cytoplasmic vesicle membrane. In terms of biological role, component of the adaptor complexes which link clathrin to receptors in coated vesicles. Clathrin-associated protein complexes are believed to interact with the cytoplasmic tails of membrane proteins, leading to their selection and concentration. Ap47 is a subunit of the plasma membrane adaptor. In concert with the BLOC-1 complex, AP-3 is required to target cargos into vesicles assembled at cell bodies for delivery into neurites and nerve terminals. The polypeptide is AP-3 complex subunit mu-2 (Ap3m2) (Rattus norvegicus (Rat)).